The primary structure comprises 136 residues: Small ribosomal subunit protein uS8c (136 aa).

The protein belongs to the universal ribosomal protein uS8 family. As to quaternary structure, part of the 30S ribosomal subunit.

It is found in the plastid. Functionally, one of the primary rRNA binding proteins, it binds directly to 16S rRNA central domain where it helps coordinate assembly of the platform of the 30S subunit. This is Small ribosomal subunit protein uS8c (rps8) from Helicosporidium sp. subsp. Simulium jonesii (Green alga).